Consider the following 327-residue polypeptide: Phospho-N-acetylmuramoyl-pentapeptide-transferase (327 aa).

10 consecutive transmembrane segments (helical) span residues 3–23, 51–71, 79–99, 115–135, 140–160, 172–192, 197–217, 223–243, 248–268, and 306–326; these read TAII…PAFI, TMGG…IALF, VTTI…DDFL, LFLQ…HGGG, VFGF…FWLV, IDGL…VIAL, FDLL…FGFN, IFMG…LSIA, WTLL…MLQV, and VDFL…AILY.

Belongs to the glycosyltransferase 4 family. MraY subfamily. Mg(2+) is required as a cofactor.

It localises to the cell membrane. The catalysed reaction is UDP-N-acetyl-alpha-D-muramoyl-L-alanyl-gamma-D-glutamyl-L-lysyl-D-alanyl-D-alanine + di-trans,octa-cis-undecaprenyl phosphate = Mur2Ac(oyl-L-Ala-gamma-D-Glu-L-Lys-D-Ala-D-Ala)-di-trans,octa-cis-undecaprenyl diphosphate + UMP. The protein operates within cell wall biogenesis; peptidoglycan biosynthesis. Catalyzes the initial step of the lipid cycle reactions in the biosynthesis of the cell wall peptidoglycan: transfers peptidoglycan precursor phospho-MurNAc-pentapeptide from UDP-MurNAc-pentapeptide onto the lipid carrier undecaprenyl phosphate, yielding undecaprenyl-pyrophosphoryl-MurNAc-pentapeptide, known as lipid I. The chain is Phospho-N-acetylmuramoyl-pentapeptide-transferase from Streptococcus gordonii (strain Challis / ATCC 35105 / BCRC 15272 / CH1 / DL1 / V288).